A 433-amino-acid chain; its full sequence is Serine hydroxymethyltransferase (433 aa).

(6S)-5,6,7,8-tetrahydrofolate-binding positions include leucine 127 and 131 to 133 (GHL). Lysine 236 bears the N6-(pyridoxal phosphate)lysine mark.

It belongs to the SHMT family. As to quaternary structure, homodimer. It depends on pyridoxal 5'-phosphate as a cofactor.

Its subcellular location is the cytoplasm. The catalysed reaction is (6R)-5,10-methylene-5,6,7,8-tetrahydrofolate + glycine + H2O = (6S)-5,6,7,8-tetrahydrofolate + L-serine. Its pathway is one-carbon metabolism; tetrahydrofolate interconversion. The protein operates within amino-acid biosynthesis; glycine biosynthesis; glycine from L-serine: step 1/1. Functionally, catalyzes the reversible interconversion of serine and glycine with tetrahydrofolate (THF) serving as the one-carbon carrier. This reaction serves as the major source of one-carbon groups required for the biosynthesis of purines, thymidylate, methionine, and other important biomolecules. Also exhibits THF-independent aldolase activity toward beta-hydroxyamino acids, producing glycine and aldehydes, via a retro-aldol mechanism. The chain is Serine hydroxymethyltransferase from Corynebacterium urealyticum (strain ATCC 43042 / DSM 7109).